We begin with the raw amino-acid sequence, 1300 residues long: uncharacterized protein (1300 aa).

Positions 1 to 26 (MGYKLKRWPLVAFTFTGIGLGVVLAA) are cleaved as a signal peptide. Cys-27 carries N-palmitoyl cysteine lipidation. The S-diacylglycerol cysteine moiety is linked to residue Cys-27. Positions 464 to 478 (AMAAASTGADSSSGT) are enriched in low complexity. Disordered regions lie at residues 464-487 (AMAA…SGGN), 620-639 (ASVS…DTQE), 774-797 (DSQK…NDKK), and 1244-1269 (KMSD…SPRT). 2 stretches are compositionally biased toward polar residues: residues 620 to 637 (ASVS…STDT) and 774 to 783 (DSQKSTNTVK). The span at 785–797 (PDIKPTRENNDKK) shows a compositional bias: basic and acidic residues. Residues 1257–1269 (TIRKPKPHHSPRT) show a composition bias toward basic residues.

It belongs to the MG307/MG309/MG338 family.

It localises to the cell membrane. This is an uncharacterized protein from Mycoplasma pneumoniae (strain ATCC 29342 / M129 / Subtype 1) (Mycoplasmoides pneumoniae).